Reading from the N-terminus, the 239-residue chain is Transcriptional regulatory protein BtsR (239 aa).

In terms of domain architecture, Response regulatory spans 3 to 116 (KVLIVDDEPL…RLEKTLHRLR (114 aa)). Asp-54 carries the post-translational modification 4-aspartylphosphate. The region spanning 137–239 (IPCTGHSRIY…LKSLKEAIGL (103 aa)) is the HTH LytTR-type domain.

Post-translationally, phosphorylated by BtsS.

Member of the two-component regulatory system BtsS/BtsR. BtsR regulates expression of btsT by binding to its promoter region. This chain is Transcriptional regulatory protein BtsR, found in Salmonella typhimurium (strain LT2 / SGSC1412 / ATCC 700720).